The following is a 1026-amino-acid chain: MRFFALFIYRPVATILIAAAITLCGILGFRLLPVAPLPQVDFPVIMVSASLPGASPETMASSVATPLERSLGRIAGVNEMTSSSSLGSTRIILEFNFDRDINGAARDVQAAINAAQSLLPGGMPSRPTYRKANPSDAPIMILTLTSESWSQGKLYDFASTQLAQTIAQIDGVGDVDVGGSSLPAVRVGLNPQALFNQGVSLDEVREAIDSANVRRPQGAIEDSVHRWQIQTNDELKTAAEYQPLIIHYNNGAAVRLGDVASVTDSVQDVRNAGMTNAKPAILLMIRKLPEANIIQTVDGIRAKLPELRAMIPAAIDLQIAQDRSPTIRASLQEVEETLAISVALVILVVFLFLRSGRATLIPAVAVPVSLIGTFAAMYLCGFSLNNLSLMALTIATGFVVDDAIVVLENIARHLEAGMKPLQAALQGTREVGFTVISMSLSLVAVFLPLLLMGGLPGRLLREFAVTLSVAIGISLVVSLTLTPMMCGWMLKSSKPRTQPRKRGVGRLLVALQQGYGTSLKWVLNHTRLVGVVFLGTVALNIWLYIAIPKTFFPEQDTGVLMGGIQADQSISFQAMRGKLQDFMKIIRDDPAVNNVTGFTGGSRVNSGMMFITLKPRGERKETAQQVIDRLRVKLAKEPGARLFLMAVQDIRVGGRQANASYQYTLLSDSLAALREWEPKIRKALSALPQLADVNSDQQDNGAEMNLIYDRDTMSRLGIDVQAANSLLNNAFGQRQISTIYQPMNQYKVVMEVDPRYSQDISALEKMFVINSDGKAIPLSYFAQWRPANAPLSVNHQGLSAASTIAFNLPTGTSLSQATEAINRTMTQLGVPPTVRGSFSGTAQVFQQTMNSQLILIVAAIATVYIVLGILYESYVHPLTILSTLPSAGVGALLALELFNAPFSLIALIGIMLLIGIVKKNAIMMVDFALEAQRSGGLTPEQAIFQACLLRFRPIMMTTLAALFGALPLVLSGGDGSELRQPLGITIVGGLVMSQLLTLYTTPVVYLFFDRLRLRFSRKNSKPIVEI.

11 helical membrane-spanning segments follow: residues 15–35 (ILIA…LPVA), 333–353 (EVEE…FLFL), 360–380 (LIPA…MYLC), 387–407 (LSLM…IVVL), 431–451 (VGFT…PLLL), 463–483 (FAVT…TLTP), 528–548 (LVGV…IAIP), 853–873 (LILI…LYES), 897–917 (LFNA…IGIV), 953–973 (PIMM…LSGG), and 984–1004 (ITIV…TPVV).

It belongs to the resistance-nodulation-cell division (RND) (TC 2.A.6) family. MdtC subfamily. As to quaternary structure, part of a tripartite efflux system composed of MdtA, MdtB and MdtC. MdtC forms a heteromultimer with MdtB.

The protein localises to the cell inner membrane. This is Multidrug resistance protein MdtC from Salmonella agona (strain SL483).